The chain runs to 784 residues: Lon protease (784 aa).

One can recognise a Lon N-terminal domain in the interval 11-204 (IPVLPLRDVV…YLMAMMESEI (194 aa)). 356–363 (GPPGVGKT) is a binding site for ATP. Residues 592 to 773 (ENRVGQVTGL…EEVLALALQN (182 aa)) form the Lon proteolytic domain. Active-site residues include Ser679 and Lys722.

This sequence belongs to the peptidase S16 family. Homohexamer. Organized in a ring with a central cavity.

Its subcellular location is the cytoplasm. It catalyses the reaction Hydrolysis of proteins in presence of ATP.. In terms of biological role, ATP-dependent serine protease that mediates the selective degradation of mutant and abnormal proteins as well as certain short-lived regulatory proteins. Required for cellular homeostasis and for survival from DNA damage and developmental changes induced by stress. Degrades polypeptides processively to yield small peptide fragments that are 5 to 10 amino acids long. Binds to DNA in a double-stranded, site-specific manner. This is Lon protease from Erwinia amylovora (Fire blight bacteria).